The chain runs to 445 residues: Glutamate--tRNA ligase 2 (445 aa).

Residues 10-20 (PSPTGRLHVGN) carry the 'HIGH' region motif. The 'KMSKS' region motif lies at 241 to 245 (ALSKR). ATP is bound at residue Lys244.

Belongs to the class-I aminoacyl-tRNA synthetase family. Glutamate--tRNA ligase type 1 subfamily. Monomer.

It localises to the cytoplasm. It catalyses the reaction tRNA(Glu) + L-glutamate + ATP = L-glutamyl-tRNA(Glu) + AMP + diphosphate. Catalyzes the attachment of glutamate to tRNA(Glu) in a two-step reaction: glutamate is first activated by ATP to form Glu-AMP and then transferred to the acceptor end of tRNA(Glu). This chain is Glutamate--tRNA ligase 2, found in Hyphomonas neptunium (strain ATCC 15444).